We begin with the raw amino-acid sequence, 139 residues long: TDP-4-oxo-6-deoxy-alpha-D-glucose-3,4-oxoisomerase (139 aa).

Histidine 49 serves as the catalytic Proton acceptor.

Homodimer.

The catalysed reaction is dTDP-4-dehydro-6-deoxy-alpha-D-glucose = dTDP-3-dehydro-6-deoxy-alpha-D-galactose. Functionally, mediates the isomerization of dTDP-6-deoxy-D-xylohex-4-ulose into dTDP-6-deoxy-D-xylohex-3-ulose in the biosynthesis of dTDP-3-acetamido-3,6-dideoxy-alpha-D-galactose, a glycan chain of the S-layer. This Aneurinibacillus thermoaerophilus protein is TDP-4-oxo-6-deoxy-alpha-D-glucose-3,4-oxoisomerase (fdtA).